The following is a 130-amino-acid chain: Large ribosomal subunit protein bL12 (130 aa).

It belongs to the bacterial ribosomal protein bL12 family. Homodimer. Part of the ribosomal stalk of the 50S ribosomal subunit. Forms a multimeric L10(L12)X complex, where L10 forms an elongated spine to which 2 to 4 L12 dimers bind in a sequential fashion. Binds GTP-bound translation factors.

In terms of biological role, forms part of the ribosomal stalk which helps the ribosome interact with GTP-bound translation factors. Is thus essential for accurate translation. This chain is Large ribosomal subunit protein bL12, found in Mycolicibacterium paratuberculosis (strain ATCC BAA-968 / K-10) (Mycobacterium paratuberculosis).